The sequence spans 119 residues: Protein yippee-like 3 (119 aa).

One can recognise a Yippee domain in the interval 19-116 (RRYSCVHCRA…IELSHMIKDN (98 aa)). Zn(2+) is bound by residues C23, C26, C79, and C82.

It belongs to the yippee family.

It is found in the nucleus. Its subcellular location is the nucleolus. Functionally, may be involved in proliferation and apoptosis in myeloid precursor cells. This chain is Protein yippee-like 3 (ypel3), found in Danio rerio (Zebrafish).